We begin with the raw amino-acid sequence, 545 residues long: Arginine-containing cyclodipeptide synthase ateA (545 aa).

Positions 390 to 425 are enriched in polar residues; it reads GNQQTPTQSADMDSTVSHRQQQPASSRSYTSKQNQM. The segment at 390-433 is disordered; that stretch reads GNQQTPTQSADMDSTVSHRQQQPASSRSYTSKQNQMPRPLVISV. A Conserved DDXXE motif motif is present at residues 434-438; sequence DDPSE.

The protein belongs to the arginine-containing cyclodipeptide synthase family.

It catalyses the reaction L-glutamyl-tRNA(Glu) + L-arginyl-tRNA(Arg) = cyclo(L-arginyl-L-glutamyl) + tRNA(Glu) + tRNA(Arg) + 2 H(+). It functions in the pathway secondary metabolite biosynthesis. Its function is as follows. Arginine-containing cyclodipeptide synthase; part of the cluster that mediates the biosynthesis of a highly modified cyclo-arginine-glutamate dipeptide (cRE). Within the pathway, ateA acts as the scaffold-generating enzyme and is responsible for formation of the cyclo-Arg-Glu diketopiperazine (cRW) from L-arginyl-tRNA(Arg) + L-glutamyl-tRNA(Glu). Additional enzymes from the cluster then further modify the cyclo-Arg-Glu diketopiperazine (cRW) scaffold. The chain is Arginine-containing cyclodipeptide synthase ateA from Aspergillus terreus.